The sequence spans 149 residues: Nucleoside diphosphate kinase (149 aa).

6 residues coordinate ATP: K9, F57, R85, T91, R102, and N112. H115 acts as the Pros-phosphohistidine intermediate in catalysis.

The protein belongs to the NDK family. As to quaternary structure, homotetramer. Mg(2+) is required as a cofactor.

It is found in the cytoplasm. It catalyses the reaction dZDP + ATP = dZTP + ADP. The enzyme catalyses a 2'-deoxyribonucleoside 5'-diphosphate + ATP = a 2'-deoxyribonucleoside 5'-triphosphate + ADP. The catalysed reaction is a ribonucleoside 5'-diphosphate + ATP = a ribonucleoside 5'-triphosphate + ADP. It participates in purine metabolism. In terms of biological role, major role in the synthesis of nucleoside triphosphates other than ATP. The ATP gamma phosphate is transferred to the NDP beta phosphate via a ping-pong mechanism, using a phosphorylated active-site intermediate. Its function is as follows. (Microbial infection) Catalyzes the phosphorylation of dZDP to dZTP, when the bacterium is infected by a phage that produces the substrate for the synthesis of dZTP (2- amino-2'-deoxyadenosine 5'-triphosphate), which is then used by the phage as a DNA polymerase substrate. This Synechococcus sp. (strain JA-3-3Ab) (Cyanobacteria bacterium Yellowstone A-Prime) protein is Nucleoside diphosphate kinase.